Consider the following 719-residue polypeptide: Fusicoccadiene synthase (719 aa).

The fusicocca-2,10(14)-diene synthase stretch occupies residues 1-334 (MEFKYSEVVE…RYNPDVSFNK (334 aa)). Mg(2+) is bound by residues aspartate 92 and aspartate 96. Positions 335–719 (TQLEWMRQGL…MRLLLELLRV (385 aa)) are geranylgeranyl diphosphate synthase. Positions 358 to 404 (EIDSDESAVSPTADESDSTEDSLGSGSRQDSSLSTGLSLSPVHSNEG) are disordered. Over residues 378-400 (DSLGSGSRQDSSLSTGLSLSPVH) the composition is skewed to polar residues. Isopentenyl diphosphate-binding residues include lysine 435, arginine 438, and histidine 467. Positions 474 and 478 each coordinate Mg(2+). Position 483 (arginine 483) interacts with dimethylallyl diphosphate. Arginine 484 serves as a coordination point for isopentenyl diphosphate. Positions 561, 562, 602, 609, 619, and 629 each coordinate dimethylallyl diphosphate.

It in the N-terminal section; belongs to the terpene synthase family. In the C-terminal section; belongs to the FPP/GGPP synthase family. Hexamer.

The catalysed reaction is geranylgeranyl diphosphate = fusicocca-2,10(14)-diene + diphosphate. The enzyme catalyses isopentenyl diphosphate + (2E,6E)-farnesyl diphosphate = (2E,6E,10E)-geranylgeranyl diphosphate + diphosphate. It functions in the pathway mycotoxin biosynthesis. Functionally, multifunctional diterpene synthase; part of the 2 gene clusters that mediate the biosynthesis of fusicoccins, diterpene glucosides that display phytohormone-like activity and function as potent activators of plasma membrane H(+)-ATPases in plants by modifying 14-3-3 proteins and cause the plant disease constriction canker. The first step in the pathway is performed by the fusicoccadiene synthase PaFS that possesses both prenyl transferase and terpene cyclase activity, converting isopentenyl diphosphate and dimethylallyl diphosphate into geranylgeranyl diphosphate (GGDP) and successively converting GGDP into fusicocca-2,10(14)-diene, a precursor for fusicoccin H. Fusicoccadiene synthase is an allosteric enzyme for GGPP cyclization that generates 64% fusicoccadiene, 9% delta-araneosene, and one additional unidentified diterpene product, when incubated with GGPP. In the absence of isopentenyl diphosphate (IPP), PaFS can also solvolyze the shorter chain geranyl diphosphate (GPP) and farnesyl diphosphate (FPP) as alternative substrates to yield predominantly acyclic products. FPP is converted to farnesol (60.5%), nerolidol (14.0%), and farnesene (14.0%), while GPP is converted to a mixture of geraniol (59.5%) and linalool (35.0%). The second step is the oxidation at the C-8 position by the cytochrome P450 monooxygenase PaP450-2 to yield fusicocca-2,10(14)-diene-8-beta-ol. The cytochrome P450 monooxygenase PaP450-1 then catalyzes the hydroxylation at the C-16 position to produce fusicocca-2,10(14)-diene-8-beta,16-diol. The dioxygenase fc-dox then catalyzes the 16-oxydation of fusicocca-2,10(14)-diene-8-beta,16-diol to yield an aldehyde (8-beta-hydroxyfusicocca-1,10(14)-dien-16-al). The short-chain dehydrogenase/reductase fc-sdr catalyzes the reduction of the aldehyde to yield fusicocca-1,10(14)-diene-8-beta,16-diol. The next step is the hydroxylation at C-9 performed by the cytochrome P450 monooxygenase PaP450-3 that leads to fusicoccin H aglycon which is glycosylated to fusicoccin H by the O-glycosyltransferase PAGT. Hydroxylation at C-12 by the cytochrome P450 monooxygenase PaP450-4 leads then to the production of fusicoccin Q and is followed by methylation by the O-methyltransferase PAMT to yield fusicoccin P. Fusicoccin P is further converted to fusicoccin J via prenylation by the O-glucose prenyltransferase PaPT. Cytochrome P450 monooxygenase PaP450-5 then performs hydroxylation at C-19 to yield dideacetyl-fusicoccin A which is acetylated to 3'-O-deacetyl-fusicoccin A by the O-acetyltransferase PaAT-2. Finally, a another acetylation by the O-acetyltransferase PaAT-1 yields fusicoccin A. The chain is Fusicoccadiene synthase from Phomopsis amygdali (Fusicoccum amygdali).